The following is a 72-amino-acid chain: Translation initiation factor IF-1 (72 aa).

Residues 1–72 (MAKEEVLEFP…TKGRITYRFK (72 aa)) enclose the S1-like domain.

Belongs to the IF-1 family. Component of the 30S ribosomal translation pre-initiation complex which assembles on the 30S ribosome in the order IF-2 and IF-3, IF-1 and N-formylmethionyl-tRNA(fMet); mRNA recruitment can occur at any time during PIC assembly.

It localises to the cytoplasm. Its function is as follows. One of the essential components for the initiation of protein synthesis. Stabilizes the binding of IF-2 and IF-3 on the 30S subunit to which N-formylmethionyl-tRNA(fMet) subsequently binds. Helps modulate mRNA selection, yielding the 30S pre-initiation complex (PIC). Upon addition of the 50S ribosomal subunit IF-1, IF-2 and IF-3 are released leaving the mature 70S translation initiation complex. The sequence is that of Translation initiation factor IF-1 from Sinorhizobium medicae (strain WSM419) (Ensifer medicae).